A 302-amino-acid polypeptide reads, in one-letter code: Lysosomal thioesterase PPT2 (302 aa).

A signal peptide spans 1 to 27 (MPGLWRQRLPSAWALLLLPFLPLLMPA). A glycan (N-linked (GlcNAc...) asparagine) is linked at Asn-60. 2 cysteine pairs are disulfide-bonded: Cys-109–Cys-117 and Cys-165–Cys-176. Ser-111 acts as the Nucleophile in catalysis. N-linked (GlcNAc...) asparagine glycosylation is found at Asn-190 and Asn-206. The active site involves Asp-228. The N-linked (GlcNAc...) asparagine glycan is linked to Asn-245. Cysteines 276 and 296 form a disulfide. Residue His-283 is part of the active site. The N-linked (GlcNAc...) asparagine glycan is linked to Asn-289.

It belongs to the palmitoyl-protein thioesterase family. Expressed throughout the brain, primarily in neurons, and at lower levels in glial cells.

It is found in the lysosome. The enzyme catalyses hexadecanoyl-CoA + H2O = hexadecanoate + CoA + H(+). It catalyses the reaction S-hexadecanoyl-N-acetylcysteamine + H2O = N-acetylcysteamine + hexadecanoate + H(+). In terms of biological role, catalyzes the cleavage of thioester bonds from S-palmitoyl-CoA or S-palmitoyl-N-acetylcysteamine (unbranched structures) but does not have activity against palmitoylcysteine or palmitoylated proteins, branched structures or bulky head groups. Conversely, hydrolyzes both long and short chain fatty acyl-CoA substrate. The protein is Lysosomal thioesterase PPT2 (Ppt2) of Mus musculus (Mouse).